Reading from the N-terminus, the 139-residue chain is Histone H3.3 type a (139 aa).

The tract at residues 1-43 (MARTKQTARKSTGAKVPRKHIGSKQAHKQTPVSSSSGGVKKVH) is disordered. Lys5 is subject to N6,N6,N6-trimethyllysine; by set1; alternate. An N6,N6-dimethyllysine; by set1; alternate modification is found at Lys5. An N6-acetyllysine; alternate mark is found at Lys5 and Lys10. N6-methyllysine; by set1; alternate is present on Lys5. Position 10 is an N6,N6,N6-trimethyllysine; alternate (Lys10). Residue Lys10 is modified to N6,N6-dimethyllysine; alternate. The residue at position 10 (Lys10) is an N6-methyllysine; alternate. Residue Ser11 is modified to Phosphoserine. At Lys15 the chain carries N6-acetyllysine. Residues 16-27 (VPRKHIGSKQAH) show a composition bias toward basic residues. N6-acetyllysine; alternate is present on residues Lys19, Lys24, Lys28, and Lys40. An N6-methyllysine; alternate mark is found at Lys19, Lys24, Lys28, and Lys40. Residues Lys28 and Lys40 each carry the N6,N6,N6-trimethyllysine; alternate modification. 2 positions are modified to N6,N6-dimethyllysine; alternate: Lys28 and Lys40. Lys60 is subject to N6-acetyllysine. N6,N6,N6-trimethyllysine; alternate is present on Lys83. Lys83 is modified (N6,N6-dimethyllysine; alternate). Lys83 bears the N6-methyllysine; alternate mark.

The protein belongs to the histone H3 family. The nucleosome is a histone octamer containing two molecules each of H2A, H2B, H3 and H4 assembled in one H3-H4 heterotetramer and two H2A-H2B heterodimers. The octamer wraps approximately 147 bp of DNA. Post-translationally, acetylation is generally linked to gene activation. In terms of processing, different methylation states of H3K4 mark distinct developmental phases. H3K4me2 is associated with euchromatic regions. H3K4me3 is a mark of active chromatin. set1 is responsible for all mono-, di- and tri-methylation of H3K4. H3K4me facilitates subsequent acetylation of H3 and H4. Methylation at H3K9 and H3K27 are linked to gene repression. H3S10ph, which is linked to gene activation, prevents methylation at H3K9 but facilitates acetylation of H3 and H4.

It is found in the nucleus. It localises to the chromosome. Core component of nucleosome. Nucleosomes wrap and compact DNA into chromatin, limiting DNA accessibility to the cellular machineries which require DNA as a template. Histones thereby play a central role in transcription regulation, DNA repair, DNA replication and chromosomal stability. DNA accessibility is regulated via a complex set of post-translational modifications of histones, also called histone code, and nucleosome remodeling. In Dictyostelium discoideum (Social amoeba), this protein is Histone H3.3 type a (H3a).